The following is a 313-amino-acid chain: Ribosomal RNA small subunit methyltransferase H (313 aa).

Residues 35 to 37, Asp55, Phe81, Asp103, and Gln110 contribute to the S-adenosyl-L-methionine site; that span reads GGH.

The protein belongs to the methyltransferase superfamily. RsmH family.

The protein resides in the cytoplasm. It carries out the reaction cytidine(1402) in 16S rRNA + S-adenosyl-L-methionine = N(4)-methylcytidine(1402) in 16S rRNA + S-adenosyl-L-homocysteine + H(+). Functionally, specifically methylates the N4 position of cytidine in position 1402 (C1402) of 16S rRNA. The sequence is that of Ribosomal RNA small subunit methyltransferase H from Pseudomonas aeruginosa (strain ATCC 15692 / DSM 22644 / CIP 104116 / JCM 14847 / LMG 12228 / 1C / PRS 101 / PAO1).